The chain runs to 414 residues: MIKAQSLDGLFEKLLDGKSIFKNKEVLRPSYTPDLLLHRNDQINSLATILVSALRGETPSNVLIYGKTGTGKTAVTRYVGKELERVSEDKSIFCSVVYINCEVIDTQYRLLANLARHFEEEVPMTGWPTDQVFMKFKEAIDSREQVIIIILDEIDKLIKKGDDVLYNLSRINTDLRKAKVSMIGVSNDLKFTEFLDPRVKSSLGEEELIFPPYDAEQISDILKQRAKMAYNDGVLGEMVIPLCAAFAAQEHGDARRALDLLRVSGEIAERENQPQVLEEHVRRAQEKIEIDRVVEVVRTLPTQSKLVLYSIILLRNRGREGKNVTTGEMYNVYRQLCHHIDVDILTQRRVTDLMSELDMLGIVNAVVVSKGRYGRTKEISLSVPVENTRKVLLEDYRLKPLVDFKASVFNKMFS.

Residues Thr-70 to Ala-74, Tyr-213, and Arg-225 contribute to the ATP site.

The protein belongs to the CDC6/cdc18 family.

Involved in regulation of DNA replication. In Methanosarcina mazei (strain ATCC BAA-159 / DSM 3647 / Goe1 / Go1 / JCM 11833 / OCM 88) (Methanosarcina frisia), this protein is ORC1-type DNA replication protein 1 (cdc6-1).